A 355-amino-acid polypeptide reads, in one-letter code: Neutral protease 2 homolog MEP6 (355 aa).

The first 19 residues, 1 to 19, serve as a signal peptide directing secretion; it reads MRLSSSLIALVALAGQALA. The propeptide occupies 20–179; that stretch reads LPFNELAERD…ASAIPELNKR (160 aa). Cystine bridges form between Cys-187-Cys-259 and Cys-266-Cys-283. His-307 is a binding site for Zn(2+). Residue Glu-308 is part of the active site. The Zn(2+) site is built by His-311 and Asp-322.

Belongs to the peptidase M35 family. Zn(2+) serves as cofactor.

The protein localises to the secreted. The enzyme catalyses Preferential cleavage of bonds with hydrophobic residues in P1'. Also 3-Asn-|-Gln-4 and 8-Gly-|-Ser-9 bonds in insulin B chain.. Secreted metalloproteinase that allows assimilation of proteinaceous substrates. Shows high activities on basic nuclear substrates such as histone and protamine. May be involved in virulence. This Coccidioides posadasii (strain C735) (Valley fever fungus) protein is Neutral protease 2 homolog MEP6 (MEP6).